A 328-amino-acid chain; its full sequence is 4-hydroxythreonine-4-phosphate dehydrogenase (328 aa).

Substrate is bound by residues His-135 and Thr-136. Residues His-165, His-210, and His-265 each coordinate a divalent metal cation. Substrate is bound by residues Lys-273, Asn-282, and Arg-291.

The protein belongs to the PdxA family. In terms of assembly, homodimer. Zn(2+) serves as cofactor. Requires Mg(2+) as cofactor. Co(2+) is required as a cofactor.

It is found in the cytoplasm. The enzyme catalyses 4-(phosphooxy)-L-threonine + NAD(+) = 3-amino-2-oxopropyl phosphate + CO2 + NADH. It functions in the pathway cofactor biosynthesis; pyridoxine 5'-phosphate biosynthesis; pyridoxine 5'-phosphate from D-erythrose 4-phosphate: step 4/5. Its function is as follows. Catalyzes the NAD(P)-dependent oxidation of 4-(phosphooxy)-L-threonine (HTP) into 2-amino-3-oxo-4-(phosphooxy)butyric acid which spontaneously decarboxylates to form 3-amino-2-oxopropyl phosphate (AHAP). The sequence is that of 4-hydroxythreonine-4-phosphate dehydrogenase from Enterobacter sp. (strain 638).